Consider the following 164-residue polypeptide: Mediator of RNA polymerase II transcription subunit 21 (164 aa).

The disordered stretch occupies residues 49 to 81 (APLPANQTQQGSTLGSNRQTVSPSTQAEAESNF). Positions 53–81 (ANQTQQGSTLGSNRQTVSPSTQAEAESNF) are enriched in polar residues. A coiled-coil region spans residues 114 to 146 (ESQLKIIDDLSKELQSVEQEQVKKIQEKDKLLK).

The protein belongs to the Mediator complex subunit 21 family. Component of the Mediator complex.

The protein resides in the nucleus. Component of the Mediator complex, a coactivator involved in the regulated transcription of nearly all RNA polymerase II-dependent genes. Mediator functions as a bridge to convey information from gene-specific regulatory proteins to the basal RNA polymerase II transcription machinery. Mediator is recruited to promoters by direct interactions with regulatory proteins and serves as a scaffold for the assembly of a functional preinitiation complex with RNA polymerase II and the general transcription factors. The sequence is that of Mediator of RNA polymerase II transcription subunit 21 (SRB7) from Scheffersomyces stipitis (strain ATCC 58785 / CBS 6054 / NBRC 10063 / NRRL Y-11545) (Yeast).